Here is a 114-residue protein sequence, read N- to C-terminus: DNA-directed RNA polymerase subunit omega (114 aa).

The protein belongs to the RNA polymerase subunit omega family. The RNAP catalytic core consists of 2 alpha, 1 beta, 1 beta' and 1 omega subunit. When a sigma factor is associated with the core the holoenzyme is formed, which can initiate transcription.

The enzyme catalyses RNA(n) + a ribonucleoside 5'-triphosphate = RNA(n+1) + diphosphate. Its function is as follows. Promotes RNA polymerase assembly. Latches the N- and C-terminal regions of the beta' subunit thereby facilitating its interaction with the beta and alpha subunits. The sequence is that of DNA-directed RNA polymerase subunit omega from Novosphingobium aromaticivorans (strain ATCC 700278 / DSM 12444 / CCUG 56034 / CIP 105152 / NBRC 16084 / F199).